The chain runs to 786 residues: Cas scaffolding protein family member 4 (786 aa).

An SH3 domain is found at 11–73 (PKALLARALY…PANRLQILTE (63 aa)). Residues S200 and S249 each carry the phosphoserine modification. The disordered stretch occupies residues 262 to 295 (SFAEESRPHALPSSSSTFYNPPSGRSRSLTPQLN). Over residues 273 to 295 (PSSSSTFYNPPSGRSRSLTPQLN) the composition is skewed to polar residues. S305 bears the Phosphoserine mark. Disordered stretches follow at residues 361-429 (QAGK…SEES) and 612-670 (IQPP…ERKP). The span at 364–373 (KELEKAKEVS) shows a compositional bias: basic and acidic residues. Residues 374 to 391 (ENSAGHNSSWFSRRTTSP) show a composition bias toward polar residues. Phosphoserine occurs at positions 376 and 390. A compositionally biased stretch (low complexity) spans 399-427 (SGSSSDSRASIVSSCSTTSTDDSSSSSSE). Basic and acidic residues predominate over residues 630–642 (KQREDEHSSELLK).

It belongs to the CAS family. Interacts (via SH3 domain) with PTK2/FAK1 (via C-terminus). Post-translationally, phosphorylated on tyrosines by SRC. Expressed abundantly in lung and spleen. Also highly expressed in ovarian and leukemia cell lines.

It is found in the cytoplasm. The protein localises to the cytoskeleton. It localises to the cell junction. The protein resides in the focal adhesion. Its function is as follows. Docking protein that plays a role in tyrosine kinase-based signaling related to cell adhesion and cell spreading. Regulates PTK2/FAK1 activity, focal adhesion integrity, and cell spreading. The polypeptide is Cas scaffolding protein family member 4 (CASS4) (Homo sapiens (Human)).